Consider the following 86-residue polypeptide: Small ribosomal subunit protein uS17 (86 aa).

It belongs to the universal ribosomal protein uS17 family. As to quaternary structure, part of the 30S ribosomal subunit.

One of the primary rRNA binding proteins, it binds specifically to the 5'-end of 16S ribosomal RNA. This Bifidobacterium longum (strain DJO10A) protein is Small ribosomal subunit protein uS17.